The chain runs to 313 residues: Protein PHOSPHATE-INDUCED 1 (313 aa).

An N-terminal signal peptide occupies residues 1 to 22 (MATSHFILKLFLVISFCNVCFA). N-linked (GlcNAc...) asparagine glycosylation is present at asparagine 119.

This sequence belongs to the EXORDIUM family.

Its subcellular location is the secreted. The protein resides in the extracellular space. It is found in the apoplast. Its function is as follows. May be involved in the regulation of cell division. This Nicotiana tabacum (Common tobacco) protein is Protein PHOSPHATE-INDUCED 1.